Here is a 256-residue protein sequence, read N- to C-terminus: Homeobox protein TGIF2LX (256 aa).

Positions 1-45 are disordered; that stretch reads MEAAADSPAETRSRVEKDSRRVEKDSRRPKKDSPAKTQSPAQDTS. Over residues 9–34 the composition is skewed to basic and acidic residues; that stretch reads AETRSRVEKDSRRVEKDSRRPKKDSP. Residues 35-45 show a composition bias toward polar residues; it reads AKTQSPAQDTS. The homeobox; TALE-type DNA-binding region spans 62 to 125; the sequence is EHKKKRKGYL…INARRRILPD (64 aa). The tract at residues 136-224 is disordered; that stretch reads VGHKTGKDAN…SSSPEPVSTE (89 aa). The span at 166 to 179 shows a compositional bias: polar residues; sequence DNVQSLPLRSSPKG. A compositionally biased stretch (low complexity) spans 209–224; that stretch reads VSNITSSSSPEPVSTE.

It belongs to the TALE/TGIF homeobox family.

The protein localises to the nucleus. In terms of biological role, may have a transcription role in testis. The protein is Homeobox protein TGIF2LX (TGIF2LX) of Papio hamadryas (Hamadryas baboon).